A 127-amino-acid chain; its full sequence is Large ribosomal subunit protein bL17 (127 aa).

Belongs to the bacterial ribosomal protein bL17 family. Part of the 50S ribosomal subunit. Contacts protein L32.

The protein is Large ribosomal subunit protein bL17 of Lactobacillus delbrueckii subsp. bulgaricus (strain ATCC 11842 / DSM 20081 / BCRC 10696 / JCM 1002 / NBRC 13953 / NCIMB 11778 / NCTC 12712 / WDCM 00102 / Lb 14).